Reading from the N-terminus, the 484-residue chain is Glycogen synthase (484 aa).

K15 is an ADP-alpha-D-glucose binding site.

It belongs to the glycosyltransferase 1 family. Bacterial/plant glycogen synthase subfamily.

The enzyme catalyses [(1-&gt;4)-alpha-D-glucosyl](n) + ADP-alpha-D-glucose = [(1-&gt;4)-alpha-D-glucosyl](n+1) + ADP + H(+). Its pathway is glycan biosynthesis; glycogen biosynthesis. Its function is as follows. Synthesizes alpha-1,4-glucan chains using ADP-glucose. In Syntrophotalea carbinolica (strain DSM 2380 / NBRC 103641 / GraBd1) (Pelobacter carbinolicus), this protein is Glycogen synthase.